The sequence spans 149 residues: Ribonuclease H (149 aa).

One can recognise an RNase H type-1 domain in the interval 1–142; it reads MSDSVELFTD…ADQLANRGVD (142 aa). The Mg(2+) site is built by Asp-10, Glu-48, Asp-70, and Asp-134.

The protein belongs to the RNase H family. In terms of assembly, monomer. It depends on Mg(2+) as a cofactor.

The protein localises to the cytoplasm. The catalysed reaction is Endonucleolytic cleavage to 5'-phosphomonoester.. Endonuclease that specifically degrades the RNA of RNA-DNA hybrids. This chain is Ribonuclease H, found in Pseudomonas savastanoi pv. phaseolicola (strain 1448A / Race 6) (Pseudomonas syringae pv. phaseolicola (strain 1448A / Race 6)).